A 724-amino-acid chain; its full sequence is Probable zinc transporter MSC2 (724 aa).

Residues 1–6 (MNLQEL) lie on the Cytoplasmic side of the membrane. A helical membrane pass occupies residues 7–27 (LAKVPLLLSYPTIILSSNLIV). The Lumenal portion of the chain corresponds to 28–58 (PSHNDLISRAASTSAAEYADEKLIFFSTDHA). Residues 59-79 (IRLIFLPTFVASSFNLFAHYF) form a helical membrane-spanning segment. The Cytoplasmic segment spans residues 80 to 90 (NFINYSSRRKY). The helical transmembrane segment at 91 to 111 (YVLFTAIYFLSILTAIFHPIQ) threads the bilayer. The Lumenal segment spans residues 112–134 (STCITLLIIKLLTTADESSPKIA). The helical transmembrane segment at 135–155 (LNFKTILKTFVPFITLTLVIL) threads the bilayer. Topologically, residues 156-174 (RWDPSFDASSGDVNKISTS) are cytoplasmic. Residues 175–195 (LAAYALLILTLRYASPLILST) traverse the membrane as a helical segment. Residues 196 to 219 (LSSSIGVVSKDTSVAQHSISRNKR) are Lumenal-facing. Residues 220–240 (FPLILVLPIFSFVLLYLMTIV) form a helical membrane-spanning segment. Residues 241–244 (NKTY) lie on the Cytoplasmic side of the membrane. The helical transmembrane segment at 245–265 (NIQLLMVFVFFGCLSIFFLSL) threads the bilayer. The Lumenal segment spans residues 266–298 (KDLFTEDGNQKKGGQEDEYCRMFDIKYMISYLW). Residues 299–319 (LTRFTILLTGIMAIVVHFLSF) traverse the membrane as a helical segment. At 320 to 386 (NEITSSIKTD…KQMALNKDTR (67 aa)) the chain is on the cytoplasmic side. Residues 387-407 (SIFSFLLLNTAFMFVQLLYSF) traverse the membrane as a helical segment. Topologically, residues 408–417 (RSKSLGLLSD) are lumenal. A helical transmembrane segment spans residues 418–438 (SLHMALDCTSLLLGLIAGVLT). Residues 439 to 453 (KKPASDKFPFGLNYL) lie on the Cytoplasmic side of the membrane. The helical transmembrane segment at 454–474 (GTLAGFTNGVLLLGIVCGIFV) threads the bilayer. Residues 475–491 (EAIERIFNPIHLHATNE) are Lumenal-facing. The helical transmembrane segment at 492–512 (LLVVATLGLLVNLVGLFAFDH) threads the bilayer. At 513–528 (GAHDHGGTDNENMKGI) the chain is on the cytoplasmic side. A helical membrane pass occupies residues 529-549 (FLHILADTLGSVGVVISTLLI). Residues 550-563 (KLTHWPIFDPIASL) are Lumenal-facing. Residues 564–584 (LIGSLILLSALPLLKSTSANI) traverse the membrane as a helical segment. Residues 585–724 (LLRLDDKKHN…NSLPLQPIAN (140 aa)) are Cytoplasmic-facing. The tract at residues 614-653 (TPRFWPTESGSSGHSHAHTHSHAENHSHEHHHDQKNGSQE) is disordered. Residues 634 to 648 (SHAENHSHEHHHDQK) show a composition bias toward basic and acidic residues.

Belongs to the cation diffusion facilitator (CDF) transporter (TC 2.A.4) family. SLC30A subfamily.

The protein resides in the endoplasmic reticulum membrane. Its subcellular location is the nucleus membrane. Functionally, probably act as a zinc ion transporter moving zinc from the nucleus/endoplasmic reticulum to the cytoplasm. Involved in zinc ion homeostasis and cellular distribution. In Saccharomyces cerevisiae (strain ATCC 204508 / S288c) (Baker's yeast), this protein is Probable zinc transporter MSC2 (MSC2).